A 282-amino-acid chain; its full sequence is Probable porphobilinogen deaminase (282 aa).

An S-(dipyrrolylmethanemethyl)cysteine modification is found at C233.

This sequence belongs to the HMBS family. Dipyrromethane serves as cofactor.

The catalysed reaction is 4 porphobilinogen + H2O = hydroxymethylbilane + 4 NH4(+). It functions in the pathway porphyrin-containing compound metabolism; protoporphyrin-IX biosynthesis; coproporphyrinogen-III from 5-aminolevulinate: step 2/4. Tetrapolymerization of the monopyrrole PBG into the hydroxymethylbilane pre-uroporphyrinogen in several discrete steps. The chain is Probable porphobilinogen deaminase from Picrophilus torridus (strain ATCC 700027 / DSM 9790 / JCM 10055 / NBRC 100828 / KAW 2/3).